Here is a 293-residue protein sequence, read N- to C-terminus: 4-diphosphocytidyl-2-C-methyl-D-erythritol kinase (293 aa).

Lysine 16 is an active-site residue. 99-109 (PMGAGLGGGSS) lines the ATP pocket. Aspartate 141 is a catalytic residue.

Belongs to the GHMP kinase family. IspE subfamily.

The enzyme catalyses 4-CDP-2-C-methyl-D-erythritol + ATP = 4-CDP-2-C-methyl-D-erythritol 2-phosphate + ADP + H(+). It participates in isoprenoid biosynthesis; isopentenyl diphosphate biosynthesis via DXP pathway; isopentenyl diphosphate from 1-deoxy-D-xylulose 5-phosphate: step 3/6. Functionally, catalyzes the phosphorylation of the position 2 hydroxy group of 4-diphosphocytidyl-2C-methyl-D-erythritol. In Burkholderia pseudomallei (strain 668), this protein is 4-diphosphocytidyl-2-C-methyl-D-erythritol kinase.